The sequence spans 239 residues: C-8 sterol isomerase erg2 (239 aa).

N11 is a glycosylation site (N-linked (GlcNAc...) asparagine). A helical membrane pass occupies residues 27 to 47; the sequence is KFGFLAVFVAIFAALYSYLDA. The N-linked (GlcNAc...) asparagine glycan is linked to N73.

The protein belongs to the ERG2 family.

It is found in the endoplasmic reticulum membrane. The enzyme catalyses fecosterol = episterol. The protein operates within steroid metabolism; ergosterol biosynthesis. Functionally, C-8 sterol isomerase; part of the third module of ergosterol biosynthesis pathway that includes the late steps of the pathway. Erg2 catalyzes the reaction which results in unsaturation at C-7 in the B ring of sterols and thus converts fecosterol to episterol. The third module or late pathway involves the ergosterol synthesis itself through consecutive reactions that mainly occur in the endoplasmic reticulum (ER) membrane. Firstly, the squalene synthase erg9 catalyzes the condensation of 2 farnesyl pyrophosphate moieties to form squalene, which is the precursor of all steroids. Squalene synthase is crucial for balancing the incorporation of farnesyl diphosphate (FPP) into sterol and nonsterol isoprene synthesis. Secondly, squalene is converted into lanosterol by the consecutive action of the squalene epoxidase erg1 and the lanosterol synthase erg7. Then, the delta(24)-sterol C-methyltransferase erg6 methylates lanosterol at C-24 to produce eburicol. Eburicol is the substrate of the sterol 14-alpha demethylase encoded by cyp51A and cyp51B, to yield 4,4,24-trimethyl ergosta-8,14,24(28)-trienol. The C-14 reductase erg24 then reduces the C14=C15 double bond which leads to 4,4-dimethylfecosterol. A sequence of further demethylations at C-4, involving the C-4 demethylation complex containing the C-4 methylsterol oxidases erg25A or erg25B, the sterol-4-alpha-carboxylate 3-dehydrogenase erg26 and the 3-keto-steroid reductase erg27, leads to the production of fecosterol via 4-methylfecosterol. The C-8 sterol isomerase erg2 then catalyzes the reaction which results in unsaturation at C-7 in the B ring of sterols and thus converts fecosterol to episterol. The sterol-C5-desaturase erg3B then catalyzes the introduction of a C-5 double bond in the B ring to produce 5-dehydroepisterol. The 2 other sterol-C5-desaturases, erg3A and erg3C, seem to be less important in ergosterol biosynthesis. The C-22 sterol desaturase erg5 further converts 5-dehydroepisterol into ergosta-5,7,22,24(28)-tetraen-3beta-ol by forming the C-22(23) double bond in the sterol side chain. Finally, ergosta-5,7,22,24(28)-tetraen-3beta-ol is substrate of the C-24(28) sterol reductases erg4A and erg4B to produce ergosterol. Possible alternative sterol biosynthetic pathways might exist from fecosterol to ergosterol, depending on the activities of the erg3 isoforms. The chain is C-8 sterol isomerase erg2 from Aspergillus fumigatus (strain ATCC MYA-4609 / CBS 101355 / FGSC A1100 / Af293) (Neosartorya fumigata).